The following is a 40-amino-acid chain: uncharacterized protein (40 aa).

This is an uncharacterized protein from Haemophilus influenzae (strain ATCC 51907 / DSM 11121 / KW20 / Rd).